A 214-amino-acid polypeptide reads, in one-letter code: Ribosomal RNA small subunit methyltransferase G (214 aa).

Residues G78, L83, 129 to 130 (AE), and R144 each bind S-adenosyl-L-methionine.

This sequence belongs to the methyltransferase superfamily. RNA methyltransferase RsmG family.

It is found in the cytoplasm. The enzyme catalyses guanosine(527) in 16S rRNA + S-adenosyl-L-methionine = N(7)-methylguanosine(527) in 16S rRNA + S-adenosyl-L-homocysteine. In terms of biological role, specifically methylates the N7 position of guanine in position 527 of 16S rRNA. The protein is Ribosomal RNA small subunit methyltransferase G of Marinobacter nauticus (strain ATCC 700491 / DSM 11845 / VT8) (Marinobacter aquaeolei).